The chain runs to 1035 residues: FACT complex subunit SPT16 (1035 aa).

The stretch at 432–500 forms a coiled coil; the sequence is FLKKEDEEEE…AKRRLTEQKG (69 aa). Disordered stretches follow at residues 491–520 and 920–1035; these read AKRR…ASQV and EQGG…KRKK. The span at 499-519 shows a compositional bias: polar residues; sequence KGGQQTMKARKSNVSYKNASQ. Acidic residues predominate over residues 929–985; the sequence is PDGEGSDAAEGDSESELDDETFNPSEDEEEEEEDSDEDYSDETEDSVDSEESADSEE. The segment covering 986-1006 has biased composition (basic and acidic residues); the sequence is ESGKDWDELEEEARKADRESL.

This sequence belongs to the peptidase M24 family. SPT16 subfamily. In terms of assembly, component of the FACT complex (also called the DUF complex), a stable heterodimer of ssrp1 and supt16h. May also be a component of a ck2-spt16-ssrp1 complex composed of ssrp1, supt16h, csnk2a1, csnk2a2 and csnk2b. The FACT complex may also interact with vcp.

Its subcellular location is the nucleus. It is found in the chromosome. In terms of biological role, component of the FACT complex, a general chromatin factor that acts to reorganize nucleosomes. The FACT complex is involved in multiple processes that require DNA as a template such as mRNA elongation, DNA replication and DNA repair. During transcription elongation the FACT complex acts as a histone chaperone that both destabilizes and restores nucleosomal structure. It facilitates the passage of RNA polymerase II and transcription by promoting the dissociation of one histone H2A-H2B dimer from the nucleosome, then subsequently promotes the reestablishment of the nucleosome following the passage of RNA polymerase II. The chain is FACT complex subunit SPT16 (supt16h) from Xenopus laevis (African clawed frog).